A 527-amino-acid chain; its full sequence is Aspartokinase (527 aa).

Thr333 bears the Phosphothreonine mark. Residues 442-527 form the ACT domain; the sequence is LVGKHMKQYI…RLEQLKRLGI (86 aa).

This sequence belongs to the aspartokinase family. As to quaternary structure, homohexamer. Interacts with FPR1; the interaction is direct, plays a role in feedback inhibition of aspartokinase by threonine, and inhibited by tacrolimus and sirolimus.

The catalysed reaction is L-aspartate + ATP = 4-phospho-L-aspartate + ADP. Its pathway is amino-acid biosynthesis; L-methionine biosynthesis via de novo pathway; L-homoserine from L-aspartate: step 1/3. It functions in the pathway amino-acid biosynthesis; L-threonine biosynthesis; L-threonine from L-aspartate: step 1/5. With respect to regulation, allosterically inhibited by threonine. Phosphorylates aspartate, the first step in the biosynthesis of amino acids that derive from aspartate (the aspartate family of amino acids), including methioinine and threonine, the latter of which is a precursor to isoleucine. The polypeptide is Aspartokinase (HOM3) (Saccharomyces cerevisiae (strain ATCC 204508 / S288c) (Baker's yeast)).